The chain runs to 545 residues: Sulfite oxidase, mitochondrial (545 aa).

A mitochondrion-targeting transit peptide spans 1 to 79; that stretch reads MLLLHRAVVL…YQDHRCRAAQ (79 aa). A Cytochrome b5 heme-binding domain is found at 82-161; sequence THIYTKEEVS…LAQYKIGELN (80 aa). His-118 serves as a coordination point for heme b. Residue Ser-123 is modified to Phosphoserine. Positions 143, 145, and 147 each coordinate heme b. The hinge stretch occupies residues 165-174; the sequence is KVAPTVETSD. A moco domain region spans residues 175–401; that stretch reads PYADDPVRHP…YSHWQRRDYK (227 aa). Mo-molybdopterin is bound by residues 215 to 219, Cys-264, Asp-322, His-361, Arg-366, and 377 to 379; these read FTRNH and HVK. The segment at 402-538 is homodimerization; it reads GFSPSVDWET…RGVLSNAWHR (137 aa).

In terms of assembly, homodimer. It depends on heme b as a cofactor. Mo-molybdopterin is required as a cofactor.

It is found in the mitochondrion intermembrane space. It catalyses the reaction sulfite + O2 + H2O = sulfate + H2O2. It functions in the pathway energy metabolism; sulfur metabolism. Catalyzes the oxidation of sulfite to sulfate, the terminal reaction in the oxidative degradation of sulfur-containing amino acids. The polypeptide is Sulfite oxidase, mitochondrial (SUOX) (Homo sapiens (Human)).